The chain runs to 134 residues: Small ribosomal subunit protein uS11 (134 aa).

Belongs to the universal ribosomal protein uS11 family. Part of the 30S ribosomal subunit. Interacts with proteins S7 and S18. Binds to IF-3.

Functionally, located on the platform of the 30S subunit, it bridges several disparate RNA helices of the 16S rRNA. Forms part of the Shine-Dalgarno cleft in the 70S ribosome. This is Small ribosomal subunit protein uS11 from Delftia acidovorans (strain DSM 14801 / SPH-1).